We begin with the raw amino-acid sequence, 228 residues long: Large ribosomal subunit protein uL3 (228 aa).

Positions 135–159 (MKSQRASHGNSRSHNVPGSIGMAQD) are disordered. Positions 140 to 150 (ASHGNSRSHNV) are enriched in polar residues. Gln158 carries the N5-methylglutamine modification.

This sequence belongs to the universal ribosomal protein uL3 family. As to quaternary structure, part of the 50S ribosomal subunit. Forms a cluster with proteins L14 and L19. In terms of processing, methylated by PrmB.

In terms of biological role, one of the primary rRNA binding proteins, it binds directly near the 3'-end of the 23S rRNA, where it nucleates assembly of the 50S subunit. This is Large ribosomal subunit protein uL3 from Albidiferax ferrireducens (strain ATCC BAA-621 / DSM 15236 / T118) (Rhodoferax ferrireducens).